The primary structure comprises 378 residues: Spermidine/putrescine import ATP-binding protein PotA (378 aa).

The 231-residue stretch at 18-248 folds into the ABC transporter domain; it reads VQLAGIRKCF…PKNLFVAGFI (231 aa). 50–57 lines the ATP pocket; the sequence is GPSGCGKT.

Belongs to the ABC transporter superfamily. Spermidine/putrescine importer (TC 3.A.1.11.1) family. As to quaternary structure, the complex is composed of two ATP-binding proteins (PotA), two transmembrane proteins (PotB and PotC) and a solute-binding protein (PotD).

It is found in the cell inner membrane. The enzyme catalyses ATP + H2O + polyamine-[polyamine-binding protein]Side 1 = ADP + phosphate + polyamineSide 2 + [polyamine-binding protein]Side 1.. Functionally, part of the ABC transporter complex PotABCD involved in spermidine/putrescine import. Responsible for energy coupling to the transport system. The chain is Spermidine/putrescine import ATP-binding protein PotA from Shigella flexneri.